Consider the following 355-residue polypeptide: UDP-3-O-acylglucosamine N-acyltransferase (355 aa).

Catalysis depends on histidine 246, which acts as the Proton acceptor.

This sequence belongs to the transferase hexapeptide repeat family. LpxD subfamily. Homotrimer.

The enzyme catalyses a UDP-3-O-[(3R)-3-hydroxyacyl]-alpha-D-glucosamine + a (3R)-hydroxyacyl-[ACP] = a UDP-2-N,3-O-bis[(3R)-3-hydroxyacyl]-alpha-D-glucosamine + holo-[ACP] + H(+). It participates in bacterial outer membrane biogenesis; LPS lipid A biosynthesis. Its function is as follows. Catalyzes the N-acylation of UDP-3-O-acylglucosamine using 3-hydroxyacyl-ACP as the acyl donor. Is involved in the biosynthesis of lipid A, a phosphorylated glycolipid that anchors the lipopolysaccharide to the outer membrane of the cell. The chain is UDP-3-O-acylglucosamine N-acyltransferase from Polaromonas naphthalenivorans (strain CJ2).